Reading from the N-terminus, the 420-residue chain is Melatonin receptor type 1C (420 aa).

Topologically, residues 1–34 (MMEVNSTCLDCRTPGTIRTEQDAQDSASQGLTSA) are extracellular. N5 carries N-linked (GlcNAc...) asparagine glycosylation. Residues 35–55 (LAVVLIFTIVVDVLGNILVIL) form a helical membrane-spanning segment. Residues 56–73 (SVLRNKKLQNAGNLFVVS) are Cytoplasmic-facing. Residues 74–94 (LSIADLVVAVYPYPVILIAIF) traverse the membrane as a helical segment. Residues 95–106 (QNGWTLGNIHCQ) are Extracellular-facing. Cysteines 105 and 182 form a disulfide. The helical transmembrane segment at 107–127 (ISGFLMGLSVIGSVFNITAIA) threads the bilayer. The Cytoplasmic portion of the chain corresponds to 128–152 (INRYCYICHSLRYDKLYNQRSTWCY). A helical membrane pass occupies residues 153–173 (LGLTWILTIIAIVPNFFVGSL). Topologically, residues 174–192 (QYDPRIFSCTFAQTVSSSY) are extracellular. Residues 193 to 213 (TITVVVVHFIVPLSVVTFCYL) form a helical membrane-spanning segment. At 214-245 (RIWVLVIQVKHRVRQDFKQKLTQTDLRNFLTM) the chain is on the cytoplasmic side. The chain crosses the membrane as a helical span at residues 246–266 (FVVFVLFAVCWAPLNFIGLAV). Topologically, residues 267 to 279 (AINPFHVAPKIPE) are extracellular. A helical transmembrane segment spans residues 280 to 303 (WLFVLSYFMAYFNSCLNAVIYGVL). Topologically, residues 304 to 420 (NQNFRKEYKR…ELCKDGISQR (117 aa)) are cytoplasmic.

Belongs to the G-protein coupled receptor 1 family. As to expression, moderately expressed in dermal melanophores.

Its subcellular location is the cell membrane. Its function is as follows. High affinity receptor for melatonin. Likely to mediate the potent effects of melatonin on pigment aggregation in melanophores. The activity of this receptor is mediated by pertussis toxin sensitive G proteins that inhibit adenylate cyclase activity. The chain is Melatonin receptor type 1C (mtnr1c) from Xenopus laevis (African clawed frog).